A 185-amino-acid polypeptide reads, in one-letter code: Large ribosomal subunit protein uL18 (185 aa).

Belongs to the universal ribosomal protein uL18 family. Part of the 50S ribosomal subunit. Contacts the 5S and 23S rRNAs.

Functionally, this is one of the proteins that bind and probably mediate the attachment of the 5S RNA into the large ribosomal subunit, where it forms part of the central protuberance. In Halorubrum lacusprofundi (strain ATCC 49239 / DSM 5036 / JCM 8891 / ACAM 34), this protein is Large ribosomal subunit protein uL18.